The chain runs to 319 residues: MKRIGILTSGGDAPGMNAAIRAVTRTALANGIEVCGIRYGYAGLVAGDIFQMTSETVADKISRGGTFLYSARFPEFKEEEVQLKGIEQLKKHGIDALVVIGGDGSYHGALKLTRHGYNAIGLPGSIDNDIPYTDYTIGFDTACNTAMEAIDKIRDTATSHQRVFVVNVMGRDCGDIAMHVGVATGADAIVIPEEPYDIKEIAENLKQGFANGKKHGIVVLAEGVMDAEKFKDELLKYGDFDARANVLGHMQRGGSPTMRDRVVASEMGAYAVKLLLEGKGGLAVGMENNKLTHHDILDLFDAKHHGNYALYSLNKDLAK.

Position 11 (G11) interacts with ATP. 21–25 (RAVTR) serves as a coordination point for ADP. ATP contacts are provided by residues 72-73 (RF) and 102-105 (GDGS). D103 contacts Mg(2+). 125–127 (SID) lines the substrate pocket. D127 acts as the Proton acceptor in catalysis. R154 lines the ADP pocket. Substrate contacts are provided by residues R162 and 169 to 171 (MGR). Residues 185–187 (GAD) and 213–215 (KKH) each bind ADP. Residues E222, R243, and 249-252 (HMQR) each bind substrate.

It belongs to the phosphofructokinase type A (PFKA) family. ATP-dependent PFK group I subfamily. Prokaryotic clade 'B1' sub-subfamily. In terms of assembly, homotetramer. Mg(2+) serves as cofactor.

Its subcellular location is the cytoplasm. It catalyses the reaction beta-D-fructose 6-phosphate + ATP = beta-D-fructose 1,6-bisphosphate + ADP + H(+). The protein operates within carbohydrate degradation; glycolysis; D-glyceraldehyde 3-phosphate and glycerone phosphate from D-glucose: step 3/4. With respect to regulation, allosterically activated by ADP and other diphosphonucleosides, and allosterically inhibited by phosphoenolpyruvate. In terms of biological role, catalyzes the phosphorylation of D-fructose 6-phosphate to fructose 1,6-bisphosphate by ATP, the first committing step of glycolysis. In Lactobacillus johnsonii (strain CNCM I-12250 / La1 / NCC 533), this protein is ATP-dependent 6-phosphofructokinase.